A 322-amino-acid polypeptide reads, in one-letter code: Chromoplast-specific carotenoid-associated protein, chromoplastic (322 aa).

A chromoplast-targeting transit peptide spans 1–58 (MAFVSQFNQLPCKTLALNPPQPQLTSKPSVFPIASIGATARAAAGKSLISVRPAFKVR). Positions 67–88 (GEDKDEKYGDDSSVAVAEKEEE) are disordered.

Belongs to the PAP/fibrillin family. As to expression, expressed in corollas. Not detected in fruits, stems, leaves, and roots.

The protein localises to the plastid. The protein resides in the chromoplast. Its function is as follows. May be involved in carotenoid sequestration within chromoplasts. This is Chromoplast-specific carotenoid-associated protein, chromoplastic (CHRC) from Cucumis sativus (Cucumber).